The following is a 430-amino-acid chain: Glutamate-1-semialdehyde 2,1-aminomutase (430 aa).

The residue at position 265 (K265) is an N6-(pyridoxal phosphate)lysine.

It belongs to the class-III pyridoxal-phosphate-dependent aminotransferase family. HemL subfamily. In terms of assembly, homodimer. It depends on pyridoxal 5'-phosphate as a cofactor.

Its subcellular location is the cytoplasm. The enzyme catalyses (S)-4-amino-5-oxopentanoate = 5-aminolevulinate. Its pathway is porphyrin-containing compound metabolism; protoporphyrin-IX biosynthesis; 5-aminolevulinate from L-glutamyl-tRNA(Glu): step 2/2. In Shewanella baltica (strain OS223), this protein is Glutamate-1-semialdehyde 2,1-aminomutase.